The sequence spans 251 residues: Insulin-induced gene 1 protein (251 aa).

Residues 1 to 58 lie on the Cytoplasmic side of the membrane; the sequence is MQTLEEHCWSCSCTRGRDKKGTRLSTWLAQRAAKAMSSLNSLLSLAYHTLASSEGRSL. The helical transmembrane segment at 59-81 threads the bilayer; sequence IRRSLVLFAVGVFLALVLNLLQI. Over 82–100 the chain is Extracellular; it reads QRNVTLFPEEVIATIFSSA. The helical transmembrane segment at 101–118 threads the bilayer; it reads WWVPPCCGTAAAVVGLLY. The Cytoplasmic segment spans residues 119-133; it reads PCIDSHLGEPHKFKR. The chain crosses the membrane as a helical span at residues 134–156; it reads EWASVMRCIAVFVGINHASAKLD. Topologically, residues 157–159 are extracellular; it reads FAN. A helical membrane pass occupies residues 160 to 178; the sequence is NVQLSLTLAALSLGLWWTF. Topologically, residues 179-183 are cytoplasmic; sequence DRSRS. Residues 184–205 traverse the membrane as a helical segment; that stretch reads GLGLGITIAFLATLITQFLVYN. Residues 206 to 219 lie on the Extracellular side of the membrane; that stretch reads GVYQYTSPDFLYIR. A helical membrane pass occupies residues 220–237; that stretch reads SWLPCIFFSGGVTVGNIG. The Cytoplasmic portion of the chain corresponds to 238 to 251; sequence RQLAMGSSEKTHSD. A KxHxx motif is present at residues 245 to 251; sequence SEKTHSD.

The protein belongs to the INSIG family. In terms of assembly, interacts with scap; interaction is direct and only takes place in the presence of sterols; it prevents interaction between scap and the coat protein complex II (COPII). Associates with the SCAP-SREBP complex; association is mediated via its interaction with scap and only takes place in the presence of sterols.

The protein localises to the endoplasmic reticulum membrane. Its function is as follows. Oxysterol-binding protein that mediates feedback control of cholesterol synthesis by controlling both endoplasmic reticulum to Golgi transport of scap and degradation of hmgcr. Acts as a negative regulator of cholesterol biosynthesis by mediating the retention of the SCAP-SREBP complex in the endoplasmic reticulum, thereby blocking the processing of sterol regulatory element-binding proteins (SREBPs). Binds oxysterol, including 25-hydroxycholesterol, regulating interaction with scap and retention of the SCAP-SREBP complex in the endoplasmic reticulum. In presence of oxysterol, interacts with scap, retaining the SCAP-SREBP complex in the endoplasmic reticulum, thereby preventing scap from escorting SREBPs to the Golgi. Sterol deprivation reduces oxysterol-binding, disrupting the interaction between insig1 and scap, thereby promoting Golgi transport of the SCAP-SREBP complex, followed by processing and nuclear translocation of SREBPs. Also regulates cholesterol synthesis by regulating degradation of hmgcr. This Xenopus tropicalis (Western clawed frog) protein is Insulin-induced gene 1 protein.